Reading from the N-terminus, the 150-residue chain is Flagellar assembly factor FliW (150 aa).

Belongs to the FliW family. Interacts with translational regulator CsrA and flagellin(s).

It is found in the cytoplasm. In terms of biological role, acts as an anti-CsrA protein, binds CsrA and prevents it from repressing translation of its target genes, one of which is flagellin. Binds to flagellin and participates in the assembly of the flagellum. This Leptospira borgpetersenii serovar Hardjo-bovis (strain L550) protein is Flagellar assembly factor FliW.